The following is a 722-amino-acid chain: Dynein axonemal intermediate chain 7 (722 aa).

Positions 1–15 (MGPKAKKSGSKKKKV) are enriched in basic residues. Residues 1-20 (MGPKAKKSGSKKKKVTKAER) are disordered.

The protein belongs to the DNAI7 family. As to quaternary structure, part of the multisubunit axonemal dynein complex formed at least of two heavy chains and a number of intermediate and light chains. Associates with tubulin. Interacts with microtubule. Ubiquitinated. Ubiquitination leads to its degradation through the 26S proteasome. Ubiquitin-proteasome-mediated DNAI7 degradation occurs in mitosis.

The protein resides in the cell projection. The protein localises to the cilium. It is found in the cytoplasm. Functionally, via its association with the multisubunit axonemal dynein complex, is potentially involved in the regulation of cilia function. May act as a cell cycle regulator. This Macaca fascicularis (Crab-eating macaque) protein is Dynein axonemal intermediate chain 7.